Consider the following 129-residue polypeptide: Antileukoproteinase (129 aa).

Positions 1–22 (GRGLLPFVLLALGIXAPWAVEG) are cleaved as a signal peptide. WAP domains lie at 25 to 73 (NALK…LNPV) and 79 to 127 (VKVK…LTPV). 8 cysteine pairs are disulfide-bonded: C32/C61, C40/C65, C48/C60, C54/C69, C86/C115, C93/C119, C102/C114, and C108/C123. The segment at 81 to 129 (VKPGKCPVVYGQCMMLNPPNHCKTDSQCLGDLKCCKSMCGKVCLTPVKA) is elastase inhibitory domain.

As to quaternary structure, interacts with GRN; interaction protects progranulin from proteolysis. Found in pregnant endometrium and myometrium, placenta, allantoic fluids, fetal cord blood, and fetal liver. Also found in uterus and lung.

It localises to the secreted. In terms of biological role, acid-stable proteinase inhibitor with strong affinities for trypsin, chymotrypsin, elastase, and cathepsin G. Modulates the inflammatory and immune responses after bacterial infection, and after infection by the intracellular parasite L.major. Down-regulates responses to bacterial lipopolysaccharide (LPS). Plays a role in regulating the activation of NF-kappa-B and inflammatory responses. Has antimicrobial activity against mycobacteria, but not against salmonella. Contributes to normal resistance against infection by M.tuberculosis. Required for normal resistance to infection by L.major. Required for normal wound healing, probably by preventing tissue damage by limiting protease activity. Together with ELANE, required for normal differentiation and proliferation of bone marrow myeloid cells. The polypeptide is Antileukoproteinase (SLPI) (Sus scrofa (Pig)).